A 381-amino-acid polypeptide reads, in one-letter code: Acetylornithine deacetylase (381 aa).

His78 serves as a coordination point for Zn(2+). Residue Asp80 is part of the active site. Asp110 contributes to the Zn(2+) binding site. Glu142 is an active-site residue. Glu143, Glu167, and His353 together coordinate Zn(2+).

This sequence belongs to the peptidase M20A family. ArgE subfamily. Homodimer. It depends on Zn(2+) as a cofactor. The cofactor is Co(2+). Requires glutathione as cofactor.

The protein localises to the cytoplasm. The enzyme catalyses N(2)-acetyl-L-ornithine + H2O = L-ornithine + acetate. It functions in the pathway amino-acid biosynthesis; L-arginine biosynthesis; L-ornithine from N(2)-acetyl-L-ornithine (linear): step 1/1. Its function is as follows. Catalyzes the hydrolysis of the amide bond of N(2)-acetylated L-amino acids. Cleaves the acetyl group from N-acetyl-L-ornithine to form L-ornithine, an intermediate in L-arginine biosynthesis pathway, and a branchpoint in the synthesis of polyamines. This chain is Acetylornithine deacetylase, found in Moritella profunda.